A 383-amino-acid chain; its full sequence is S-adenosylmethionine synthase 1 (383 aa).

H15 provides a ligand contact to ATP. D17 contributes to the Mg(2+) binding site. E43 contacts K(+). E56 and Q99 together coordinate L-methionine. The interval 99–109 (QSPDIDLGVSR) is flexible loop. ATP is bound by residues 162-164 (DGK), 228-229 (RF), D237, 243-244 (RK), A260, and K264. D237 provides a ligand contact to L-methionine. Position 268 (K268) interacts with L-methionine.

It belongs to the AdoMet synthase family. As to quaternary structure, homotetramer; dimer of dimers. It depends on Mg(2+) as a cofactor. K(+) serves as cofactor.

The protein resides in the cytoplasm. The enzyme catalyses L-methionine + ATP + H2O = S-adenosyl-L-methionine + phosphate + diphosphate. Its pathway is amino-acid biosynthesis; S-adenosyl-L-methionine biosynthesis; S-adenosyl-L-methionine from L-methionine: step 1/1. Functionally, catalyzes the formation of S-adenosylmethionine (AdoMet) from methionine and ATP. The overall synthetic reaction is composed of two sequential steps, AdoMet formation and the subsequent tripolyphosphate hydrolysis which occurs prior to release of AdoMet from the enzyme. The sequence is that of S-adenosylmethionine synthase 1 from Rhodospirillum rubrum (strain ATCC 11170 / ATH 1.1.1 / DSM 467 / LMG 4362 / NCIMB 8255 / S1).